Consider the following 119-residue polypeptide: uncharacterized protein (119 aa).

This is an uncharacterized protein from Lactococcus lactis subsp. lactis (strain IL1403) (Streptococcus lactis).